A 214-amino-acid chain; its full sequence is Octanoyltransferase (214 aa).

The region spanning Gly34–Asn214 is the BPL/LPL catalytic domain. Substrate is bound by residues Arg73–His80, Ala145–Gly147, and Gly158–Ser160. The active-site Acyl-thioester intermediate is Cys176.

It belongs to the LipB family.

It is found in the cytoplasm. It carries out the reaction octanoyl-[ACP] + L-lysyl-[protein] = N(6)-octanoyl-L-lysyl-[protein] + holo-[ACP] + H(+). The protein operates within protein modification; protein lipoylation via endogenous pathway; protein N(6)-(lipoyl)lysine from octanoyl-[acyl-carrier-protein]: step 1/2. In terms of biological role, catalyzes the transfer of endogenously produced octanoic acid from octanoyl-acyl-carrier-protein onto the lipoyl domains of lipoate-dependent enzymes. Lipoyl-ACP can also act as a substrate although octanoyl-ACP is likely to be the physiological substrate. In Ehrlichia chaffeensis (strain ATCC CRL-10679 / Arkansas), this protein is Octanoyltransferase.